A 334-amino-acid polypeptide reads, in one-letter code: Glycerol-3-phosphate dehydrogenase [NAD(P)+] (334 aa).

Trp13, Arg33, and Lys106 together coordinate NADPH. Residues Lys106, Gly137, and Ser139 each coordinate sn-glycerol 3-phosphate. Residue Ala141 participates in NADPH binding. Sn-glycerol 3-phosphate-binding residues include Lys192, Asp245, Ser255, Arg256, and Asn257. Lys192 serves as the catalytic Proton acceptor. Arg256 contributes to the NADPH binding site. NADPH-binding residues include Val280 and Glu282.

Belongs to the NAD-dependent glycerol-3-phosphate dehydrogenase family.

Its subcellular location is the cytoplasm. The enzyme catalyses sn-glycerol 3-phosphate + NAD(+) = dihydroxyacetone phosphate + NADH + H(+). The catalysed reaction is sn-glycerol 3-phosphate + NADP(+) = dihydroxyacetone phosphate + NADPH + H(+). It functions in the pathway membrane lipid metabolism; glycerophospholipid metabolism. Functionally, catalyzes the reduction of the glycolytic intermediate dihydroxyacetone phosphate (DHAP) to sn-glycerol 3-phosphate (G3P), the key precursor for phospholipid synthesis. The sequence is that of Glycerol-3-phosphate dehydrogenase [NAD(P)+] from Chlamydia muridarum (strain MoPn / Nigg).